A 417-amino-acid chain; its full sequence is MLKREMNIADYDAELWQAMEQEKVRQEEHIELIASENYTSPRVMQAQGSQLTNKYAEGYPGKRYYGGCEYVDIVEQLAIDRAKELFGADYANVQPHSGSQANFAVYTALLEPGDTVLGMNLAHGGHLTHGSPVNFSGKLYNIVPYGIDATGHIDYADLEKQAKEHKPKMIIGGFSAYSGVVDWAKMREIADSIGAYLFVDMAHVAGLVAAGVYPNPVPHAHVVTTTTHKTLAGPRGGLILAKGGSEELYKKLNSAVFPGGQGGPLMHVIAGKAVALKEAMEPEFKTYQQQVAKNAKAMVEVFLERGYKVVSGGTDNHLFLVDLVDKNLTGKEADAALGRANITVNKNSVPNDPKSPFVTSGIRVGTPAITRRGFKEVEAKELAGWMCDVLDSINDEAVIERIKGKVLDICARYPVYA.

An N6-acetyllysine modification is found at K54. Residues L121 and 125-127 (GHL) each bind (6S)-5,6,7,8-tetrahydrofolate. At K229 the chain carries N6-(pyridoxal phosphate)lysine. 3 positions are modified to N6-acetyllysine: K250, K285, and K354. 355-357 (SPF) provides a ligand contact to (6S)-5,6,7,8-tetrahydrofolate. The residue at position 375 (K375) is an N6-acetyllysine.

It belongs to the SHMT family. Homodimer. The cofactor is pyridoxal 5'-phosphate.

Its subcellular location is the cytoplasm. It carries out the reaction (6R)-5,10-methylene-5,6,7,8-tetrahydrofolate + glycine + H2O = (6S)-5,6,7,8-tetrahydrofolate + L-serine. It functions in the pathway one-carbon metabolism; tetrahydrofolate interconversion. Its pathway is amino-acid biosynthesis; glycine biosynthesis; glycine from L-serine: step 1/1. Functionally, catalyzes the reversible interconversion of serine and glycine with tetrahydrofolate (THF) serving as the one-carbon carrier. This reaction serves as the major source of one-carbon groups required for the biosynthesis of purines, thymidylate, methionine, and other important biomolecules. Also exhibits THF-independent aldolase activity toward beta-hydroxyamino acids, producing glycine and aldehydes, via a retro-aldol mechanism. The polypeptide is Serine hydroxymethyltransferase (Escherichia coli O157:H7).